A 487-amino-acid polypeptide reads, in one-letter code: Calcium-dependent mitochondrial ATP-magnesium/phosphate carrier protein 2 (487 aa).

Over Met-1 to Tyr-211 the chain is Mitochondrial intermembrane. 4 consecutive EF-hand domains span residues Glu-36–Pro-71, Ser-72–Glu-107, Leu-108–Glu-138, and Ile-139–Glu-174. Residues Asp-85, Asn-87, Asp-89, Arg-91, and Glu-96 each coordinate Ca(2+). Asp-152, Asp-154, Asp-156, and Glu-163 together coordinate Ca(2+). 3 Solcar repeats span residues Ile-206–Ala-289, Ile-301–Leu-389, and Pro-400–Ser-483. Residues Phe-212–Leu-229 form a helical membrane-spanning segment. The Mitochondrial matrix segment spans residues Asp-230–Arg-263. Residues Gly-264–Tyr-283 traverse the membrane as a helical segment. The Mitochondrial intermembrane portion of the chain corresponds to Glu-284–Gly-310. A helical transmembrane segment spans residues Gly-311–Leu-324. At Asp-325–Lys-363 the chain is on the mitochondrial matrix side. Residues Gly-364 to Tyr-383 form a helical membrane-spanning segment. Topologically, residues Glu-384–Gln-405 are mitochondrial intermembrane. A helical transmembrane segment spans residues Leu-406–Leu-423. Topologically, residues Gln-424 to Lys-457 are mitochondrial matrix. The chain crosses the membrane as a helical span at residues Gly-458 to Tyr-477. Residues Glu-478 to Asp-487 lie on the Mitochondrial intermembrane side of the membrane.

It belongs to the mitochondrial carrier (TC 2.A.29) family. In terms of tissue distribution, expressed in flowers, leaves, stems, roots and seedlings, mostly in aerial parts.

The protein localises to the mitochondrion inner membrane. With respect to regulation, counter-exchange transport activity is saturable and inhibited by pyridoxal-5'-phosphate, EDTA and EGTA. Activated by calcium Ca(2+) and manganese Mn(2+) ions, and slightly by iron Fe(2+) and zinc Zn(2+) ions. Repressed by copper ions Cu(2+) and slightly by magnesium Mg(2+) ions. Magnesium Mg(2+) ions promotes slightly ATP uptake, ATP-Mg(2+) being exchanged with ATP(4-). In terms of biological role, calcium-dependent mitochondrial carrier protein that catalyzes the import of ATP co-transported with metal divalent cations across the mitochondrial inner membrane in exchange for phosphate (Pi). Can transport phosphate, AMP, ADP, ATP, adenosine 5'-phosphosulfate, sulfate and thiosulfate, and, to a lesser extent, other nucleotides. Binds calcium ions Ca(2+). Also mediates calcium uptake. The protein is Calcium-dependent mitochondrial ATP-magnesium/phosphate carrier protein 2 of Arabidopsis thaliana (Mouse-ear cress).